Reading from the N-terminus, the 457-residue chain is Phenylalanine-4-hydroxylase (457 aa).

One can recognise an ACT domain in the interval threonine 31–asparagine 108. Positions 285, 290, and 330 each coordinate Fe cation.

Belongs to the biopterin-dependent aromatic amino acid hydroxylase family. Homotetramer. Fe(2+) is required as a cofactor. Expressed in the seam cells of the lateral hypodermis, in the ventral hypodermis and in the hyp7 hypodermal syncytium, in hypodermal cells in the tail and in body wall muscle cells (at protein level).

The protein localises to the cytoplasm. It catalyses the reaction (6R)-L-erythro-5,6,7,8-tetrahydrobiopterin + L-phenylalanine + O2 = (4aS,6R)-4a-hydroxy-L-erythro-5,6,7,8-tetrahydrobiopterin + L-tyrosine. The enzyme catalyses (6R)-L-erythro-5,6,7,8-tetrahydrobiopterin + L-tryptophan + O2 = 5-hydroxy-L-tryptophan + (4aS,6R)-4a-hydroxy-L-erythro-5,6,7,8-tetrahydrobiopterin. It participates in amino-acid degradation; L-phenylalanine degradation; acetoacetate and fumarate from L-phenylalanine: step 1/6. Inhibited by tetrahydrobiopterin. Unlike its mammalian orthologs, pah-1 does not exhibit allosteric binding behavior for phenylalanine. Functionally, catalyzes the hydroxylation of L-phenylalanine to L-tyrosine. Catalyzes the hydroxylation of tryptophan to 5-hydroxy-L-tryptophan. Plays a role in the biosynthesis of a melanin-like cuticle pigment. This is Phenylalanine-4-hydroxylase from Caenorhabditis elegans.